Reading from the N-terminus, the 351-residue chain is Peptide chain release factor 1 (351 aa).

At Gln-229 the chain carries N5-methylglutamine. Residues 278–297 form a disordered region; the sequence is RVDDERSADRAAQVGSGDRS.

Belongs to the prokaryotic/mitochondrial release factor family. Post-translationally, methylated by PrmC. Methylation increases the termination efficiency of RF1.

Its subcellular location is the cytoplasm. Peptide chain release factor 1 directs the termination of translation in response to the peptide chain termination codons UAG and UAA. This chain is Peptide chain release factor 1, found in Roseobacter denitrificans (strain ATCC 33942 / OCh 114) (Erythrobacter sp. (strain OCh 114)).